Reading from the N-terminus, the 432-residue chain is UDP-glucosyltransferase B1 (432 aa).

The protein belongs to the UDP-glycosyltransferase family.

The enzyme catalyses (9Z)-17-hydroxyoctadec-9-enoate 17-O-beta-D-glucoside + UDP-alpha-D-glucose = (9Z)-17-hydroxyoctadec-9-enoate 17-O-sophoroside + UDP + H(+). In terms of biological role, catalyzes the second glycosylation step of sophorolipid biosynthesis, the further glucosylation of the previoulsy formed glucolipid to give rise to an acidic sophorolipid. The protein is UDP-glucosyltransferase B1 of Starmerella bombicola (Yeast).